Here is a 100-residue protein sequence, read N- to C-terminus: Large ribosomal subunit protein uL23 (100 aa).

This sequence belongs to the universal ribosomal protein uL23 family. Part of the 50S ribosomal subunit. Contacts protein L29, and trigger factor when it is bound to the ribosome.

One of the early assembly proteins it binds 23S rRNA. One of the proteins that surrounds the polypeptide exit tunnel on the outside of the ribosome. Forms the main docking site for trigger factor binding to the ribosome. The sequence is that of Large ribosomal subunit protein uL23 from Lacticaseibacillus casei (strain BL23) (Lactobacillus casei).